Consider the following 149-residue polypeptide: MYGKIIFVLLLSAIVSISASSTTEVAMHTSTSSVTKSYISSETSDKHKWDTYPATPRAHEVSEIYVTTVYPPEEENGEGVQLVHRFSEPEITLIIFGVMAGVIGTILLIYYSIRRLIKKSPSDVKPLPSPDTDVPLSSVEIENPETSDQ.

A signal peptide spans 1-19; it reads MYGKIIFVLLLSAIVSISA. Over 20–90 the chain is Extracellular; that stretch reads SSTTEVAMHT…QLVHRFSEPE (71 aa). The O-linked (GalNAc...) serine glycan is linked to Ser-21. O-linked (GalNAc...) threonine glycans are attached at residues Thr-22, Thr-23, and Thr-29. O-linked (GalNAc...) serine glycosylation occurs at Ser-30. Residue Thr-31 is glycosylated (O-linked (GalNAc...) threonine). The O-linked (GalNAc...) serine glycan is linked to Ser-32. The O-linked (GalNAc...) threonine glycan is linked to Thr-35. O-linked (GalNAc...) serine glycans are attached at residues Ser-37 and Ser-40. O-linked (GalNAc...) threonine glycosylation is present at Thr-43. Ser-44 carries O-linked (GalNAc...) serine glycosylation. O-linked (GalNAc...) threonine glycosylation is found at Thr-51 and Thr-55. O-linked (GalNAc...) serine glycosylation occurs at Ser-62. The O-linked (GalNAc...) threonine glycan is linked to Thr-68. Residues 91–113 traverse the membrane as a helical segment; that stretch reads ITLIIFGVMAGVIGTILLIYYSI. Over 114 to 149 the chain is Cytoplasmic; it reads RRLIKKSPSDVKPLPSPDTDVPLSSVEIENPETSDQ. The segment at 122–149 is disordered; sequence SDVKPLPSPDTDVPLSSVEIENPETSDQ. 2 positions are modified to phosphoserine: Ser-137 and Ser-147.

This sequence belongs to the glycophorin-A family. In terms of assembly, homodimer. Component of the ankyrin-1 complex in the erythrocyte, composed of ANK1, RHCE, RHAG, SLC4A1, EPB42, GYPA, GYPB and AQP1. Interacts with SLC4A1; a GYPA monomer is bound at each end of the SLC4A1 dimer forming a heterotetramer.

The protein localises to the cell membrane. Component of the ankyrin-1 complex, a multiprotein complex involved in the stability and shape of the erythrocyte membrane. Glycophorin A is the major intrinsic membrane protein of the erythrocyte. The N-terminal glycosylated segment, which lies outside the erythrocyte membrane, has MN blood group receptors. Appears to be important for the function of SLC4A1 and is required for high activity of SLC4A1. May be involved in translocation of SLC4A1 to the plasma membrane. In Pan troglodytes (Chimpanzee), this protein is Glycophorin-A.